Consider the following 278-residue polypeptide: 4-deoxy-L-threo-5-hexosulose-uronate ketol-isomerase (278 aa).

Zn(2+) is bound by residues His-196, His-198, Glu-203, and His-245.

The protein belongs to the KduI family. It depends on Zn(2+) as a cofactor.

It carries out the reaction 5-dehydro-4-deoxy-D-glucuronate = 3-deoxy-D-glycero-2,5-hexodiulosonate. It participates in glycan metabolism; pectin degradation; 2-dehydro-3-deoxy-D-gluconate from pectin: step 4/5. In terms of biological role, catalyzes the isomerization of 5-dehydro-4-deoxy-D-glucuronate to 3-deoxy-D-glycero-2,5-hexodiulosonate. The sequence is that of 4-deoxy-L-threo-5-hexosulose-uronate ketol-isomerase from Pectobacterium carotovorum subsp. carotovorum (Erwinia carotovora subsp. carotovora).